Consider the following 263-residue polypeptide: Acyl-[acyl-carrier-protein]--UDP-N-acetylglucosamine O-acyltransferase (263 aa).

This sequence belongs to the transferase hexapeptide repeat family. LpxA subfamily. Homotrimer.

The protein localises to the cytoplasm. The enzyme catalyses a (3R)-hydroxyacyl-[ACP] + UDP-N-acetyl-alpha-D-glucosamine = a UDP-3-O-[(3R)-3-hydroxyacyl]-N-acetyl-alpha-D-glucosamine + holo-[ACP]. It functions in the pathway glycolipid biosynthesis; lipid IV(A) biosynthesis; lipid IV(A) from (3R)-3-hydroxytetradecanoyl-[acyl-carrier-protein] and UDP-N-acetyl-alpha-D-glucosamine: step 1/6. Its function is as follows. Involved in the biosynthesis of lipid A, a phosphorylated glycolipid that anchors the lipopolysaccharide to the outer membrane of the cell. The sequence is that of Acyl-[acyl-carrier-protein]--UDP-N-acetylglucosamine O-acyltransferase from Campylobacter jejuni subsp. jejuni serotype O:2 (strain ATCC 700819 / NCTC 11168).